A 59-amino-acid polypeptide reads, in one-letter code: Cecropin-B1 (59 aa).

Positions 1-23 (MNFNKLFLIVILAALLLLGQTEA) are cleaved as a signal peptide. Leucine amide is present on Leu-57.

This sequence belongs to the cecropin family.

The protein localises to the secreted. Its function is as follows. Cecropins have lytic and antibacterial activity against several Gram-positive and Gram-negative bacteria. This is Cecropin-B1 (CECB1) from Culex pipiens pipiens (Northern house mosquito).